The sequence spans 235 residues: MTIRLVIVEPEGAYNLGFIARLVKNFLIDEFYVVNPKCDINEAIKFSAKGSEVIEKMMKITNNFDDAIRDVDLKIATSSIADIKGDLLRKSIRPIDLERLIKDKKVAFIFGRESVGLTREEIAKSDFLLFIPANPEYPVLNLSHAVGIVLYELWRNRDNKVPTVSSEPIKLIDDYSKKITDILVNKEATKSMYLVLKRVLIKGIEDNEEAMTIVRILRKIYVRLAKKENESDKLL.

S-adenosyl-L-methionine is bound by residues 77–79 (TSS), Gly111, Ile131, and 138–140 (PVL).

It belongs to the class IV-like SAM-binding methyltransferase superfamily. RNA methyltransferase TrmH family. In terms of assembly, homodimer.

It localises to the cytoplasm. The enzyme catalyses cytidine(32) in tRNA + S-adenosyl-L-methionine = 2'-O-methylcytidine(32) in tRNA + S-adenosyl-L-homocysteine + H(+). Catalyzes the formation of 2'O-methylated cytidine (Cm32) at position 32 in tRNA. Is specific for cytidine. This Sulfolobus acidocaldarius (strain ATCC 33909 / DSM 639 / JCM 8929 / NBRC 15157 / NCIMB 11770) protein is tRNA (cytidine-2'-O-)-methyltransferase TrmJ.